The following is a 153-amino-acid chain: Large ribosomal subunit protein uL15 (153 aa).

Residues 1-47 form a disordered region; the sequence is MRLHELSPAPGSRKDRKRVGRGDAGRGNYSGRGMKGQKARSGGATRP.

Belongs to the universal ribosomal protein uL15 family. Part of the 50S ribosomal subunit.

Its function is as follows. Binds to the 23S rRNA. This is Large ribosomal subunit protein uL15 from Dehalococcoides mccartyi (strain ATCC BAA-2100 / JCM 16839 / KCTC 5957 / BAV1).